The primary structure comprises 196 residues: Adenylate kinase (196 aa).

Residue 9 to 17 (GIPGVGKST) coordinates ATP.

Belongs to the archaeal adenylate kinase family.

It localises to the cytoplasm. It carries out the reaction AMP + ATP = 2 ADP. This is Adenylate kinase from Thermococcus onnurineus (strain NA1).